The chain runs to 233 residues: Probable histidinol-phosphatase (233 aa).

This sequence belongs to the PHP hydrolase family. HisK subfamily.

It catalyses the reaction L-histidinol phosphate + H2O = L-histidinol + phosphate. The protein operates within amino-acid biosynthesis; L-histidine biosynthesis; L-histidine from 5-phospho-alpha-D-ribose 1-diphosphate: step 8/9. The protein is Probable histidinol-phosphatase (hisK) of Thermotoga maritima (strain ATCC 43589 / DSM 3109 / JCM 10099 / NBRC 100826 / MSB8).